The following is a 729-amino-acid chain: MIYHRIAVNVPLSDGLLTYSHSEPLPPGTRVLVPFRNKTVVGMVWETDIAPDMDAARILSVQTVFVEEKPLSQSWRDLLAFTSRYYHYPTGQAVFAALPQGLKETRAVEMPQPPLFYALNEAGRAQTPPPARFNKKAALWDALLSGEMTMAALKQANAQAAKLIEDWAEQGWIETTEAAKPVLRPYRGQASHSEFVLNTGQQKASDEIQTALGRFRSFLLYGITGSGKTEVYFDAMAKVLAQGRQVLFLLPEINLTPQLLKRVENRFADVPTAVLHSRMAAGRRTQDYLRAMLGQAKLVIGTRLAVFTPLPDVGLIVVDEEHDGSFKQDNELRYHARDLAVWRAKQGGCPVVLGSATPSLESWHKAQSGAYRLLQLTERAHASAQLPQVDILNIGRLKLDNGFSPQALQLLKQNFEAGGMSLVYLNRRGFAPALFCGDCGHTFGCPNCSAKMVLHQRARQLRCHHCDHREPIPFKCPDCGNQDLTAVGHGTQRVEETLRAFLPKAAVVRVDRDSTAHKNDWADLYRRIANDEIDILVGTQMLAKGHDFARLNLVIVLNADGSLYSADFRAPERLFAELMQVSGRAGRADKPGKVLIQTQLPEHPVFAAVKAQDYAVFAENELNERQMFAMPPFGFQTAVRADAPRVADAMEFLNAAKETLAPLLPESVSRFGAAPMLMVRLAERERAQVFLESTSRQDLHRAVSLWVQVLQQNRDGKIRWSVDVDPQEA.

In terms of domain architecture, Helicase ATP-binding spans 209–376 (QTALGRFRSF…QSGAYRLLQL (168 aa)). An ATP-binding site is contributed by 222–229 (GITGSGKT). A DEAH box motif is present at residues 319–322 (DEEH). Zn(2+) contacts are provided by Cys436, Cys439, Cys445, Cys448, Cys463, Cys466, Cys476, and Cys479. The Helicase C-terminal domain maps to 471 to 623 (PIPFKCPDCG…YAVFAENELN (153 aa)).

Belongs to the helicase family. PriA subfamily. As to quaternary structure, interacts with PriB with high affinity in the absence of DNA. Component of the replication restart primosome. The cofactor is Zn(2+).

The catalysed reaction is Couples ATP hydrolysis with the unwinding of duplex DNA by translocating in the 3'-5' direction.. It carries out the reaction ATP + H2O = ADP + phosphate + H(+). Helicase and ATPase activities on forked DNA are stimulated by PriB; E.coli PriB does not stimulate this helicase. PriA:PriB complex-catalyzed duplex DNA winding is inhibited by CGS 15943 (CHEBI:131351). CGS 15943 decreases ATP hydrolysis and decreases PriA's affinity for DNA. Initiates the restart of stalled replication forks, which reloads the replicative helicase on sites other than the origin of replication. Recognizes and binds to abandoned replication forks and remodels them to uncover a helicase loading site. Promotes assembly of the primosome at these replication forks. Functionally, DNA helicase with greatest unwinding activity on forked DNA substrates with relatively short duplex lagging strand arms. A DNA-dependent ATPase. Required for DNA transformation and DNA repair. Binds single-stranded (ss)DNA and replication fork-like DNA but not double-stranded (ds)DNA. The chain is Replication restart protein PriA from Neisseria gonorrhoeae (strain ATCC 700825 / FA 1090).